Consider the following 186-residue polypeptide: MSSKILSENPTELELKVAQAFVDLESQADLKAELRPLQFKSIKEIDVNGGKKALAVFVPPPSLQAYRKVQTRLTRELEKKFPDRHVVFLAERRILPKPARKARKQQKRPRSRTLTAVHDKILEDLVFPTEIIGKRVRYLVGGNKIQKVLLDSKDSTAVDYKLDSFQQLYSKLTGKQVVFEIPGESH.

It belongs to the eukaryotic ribosomal protein eS7 family. Component of the small ribosomal subunit. Mature ribosomes consist of a small (40S) and a large (60S) subunit. The 40S subunit contains about 32 different proteins and 1 molecule of RNA (18S). The 60S subunit contains 45 different proteins and 3 molecules of RNA (25S, 5.8S and 5S).

The protein resides in the cytoplasm. Functionally, component of the ribosome, a large ribonucleoprotein complex responsible for the synthesis of proteins in the cell. The small ribosomal subunit (SSU) binds messenger RNAs (mRNAs) and translates the encoded message by selecting cognate aminoacyl-transfer RNA (tRNA) molecules. The large subunit (LSU) contains the ribosomal catalytic site termed the peptidyl transferase center (PTC), which catalyzes the formation of peptide bonds, thereby polymerizing the amino acids delivered by tRNAs into a polypeptide chain. The nascent polypeptides leave the ribosome through a tunnel in the LSU and interact with protein factors that function in enzymatic processing, targeting, and the membrane insertion of nascent chains at the exit of the ribosomal tunnel. RPS7A is involved in nucleolar processing of pre-18S ribosomal RNA and ribosome assembly. The sequence is that of Small ribosomal subunit protein eS7 (RPS7A) from Candida albicans (strain SC5314 / ATCC MYA-2876) (Yeast).